A 295-amino-acid polypeptide reads, in one-letter code: Glutamyl-Q tRNA(Asp) synthetase (295 aa).

L-glutamate-binding positions include 9 to 13 (RFAPT) and E45. Residues 12-22 (PTPSGYLHFGS) carry the 'HIGH' region motif. C101, C103, Y115, and C119 together coordinate Zn(2+). 2 residues coordinate L-glutamate: Y172 and R190. The 'KMSKS' region signature appears at 228–232 (KLGKS). K231 contacts ATP.

Belongs to the class-I aminoacyl-tRNA synthetase family. GluQ subfamily. The cofactor is Zn(2+).

In terms of biological role, catalyzes the tRNA-independent activation of glutamate in presence of ATP and the subsequent transfer of glutamate onto a tRNA(Asp). Glutamate is transferred on the 2-amino-5-(4,5-dihydroxy-2-cyclopenten-1-yl) moiety of the queuosine in the wobble position of the QUC anticodon. The protein is Glutamyl-Q tRNA(Asp) synthetase of Pseudomonas syringae pv. syringae (strain B728a).